The primary structure comprises 701 residues: F-box/LRR-repeat protein 17 (701 aa).

3 disordered regions span residues 73-93 (SAGL…RDGA), 227-250 (GGGG…CQAP), and 279-321 (VRAG…IPDI). Residues 81–90 (PLSPPPPPPR) show a composition bias toward pro residues. Over residues 227 to 236 (GGGGPAGGGA) the composition is skewed to gly residues. Residues 285-294 (APSSAQQQPE) show a composition bias toward polar residues. The F-box domain occupies 318–365 (IPDINQLPPSILLKIFSNLSLNERCLSASLVCKYWRDLCLDFQFWKQL).

The protein belongs to the FBXL17 family. As to quaternary structure, part of the SCF (SKP1-CUL1-F-box) E3 ubiquitin-protein ligase complex SCF(FBXL17) composed of CUL1, SKP1, RBX1 and FBXL17. Interacts with BTB domain-containing proteins such as KLHL12, BCL6 and BACH1; specifically recognizes and binds a conserved degron of non-consecutive residues present at the interface of BTB dimers of aberrant composition. Interacts with SUFU. Interacts with PRMT1.

It is found in the cytoplasm. The protein localises to the nucleus. In terms of biological role, substrate-recognition component of the SCF(FBXL17) E3 ubiquitin ligase complex, a key component of a quality control pathway required to ensure functional dimerization of BTB domain-containing proteins (dimerization quality control, DQC). FBXL17 specifically recognizes and binds a conserved degron of non-consecutive residues present at the interface of BTB dimers of aberrant composition: aberrant BTB dimer are then ubiquitinated by the SCF(FBXL17) complex and degraded by the proteasome. The ability of the SCF(FBXL17) complex to eliminate compromised BTB dimers is required for the differentiation and survival of neural crest and neuronal cells. The SCF(FBXL17) complex mediates ubiquitination and degradation of BACH1. The SCF(FBXL17) complex is also involved in the regulation of the hedgehog/smoothened (Hh) signaling pathway by mediating the ubiquitination and degradation of SUFU, allowing the release of GLI1 from SUFU for proper Hh signal transduction. The SCF(FBXL17) complex mediates ubiquitination and degradation of PRMT1. The polypeptide is F-box/LRR-repeat protein 17 (Mus musculus (Mouse)).